Here is an 86-residue protein sequence, read N- to C-terminus: MKNLIAELLLKLAQKEEESKELVAQVEALEIIVTAMLRNMAQNEQEMLIRQVEGALEGVKPDASVPDHDTELLRQYVKKLLRHPRH.

Residues 1 to 36 are a coiled coil; that stretch reads MKNLIAELLLKLAQKEEESKELVAQVEALEIIVTAM.

Belongs to the IraP family. In terms of assembly, interacts with RssB.

The protein resides in the cytoplasm. Inhibits RpoS proteolysis by regulating RssB activity, thereby increasing the stability of the sigma stress factor RpoS especially during phosphate and magnesium starvation, but also in stationary phase and during nitrogen starvation. Its effect on RpoS stability is due to its interaction with RssB, which probably blocks the interaction of RssB with RpoS, and the consequent delivery of the RssB-RpoS complex to the ClpXP protein degradation pathway. In Salmonella choleraesuis (strain SC-B67), this protein is Anti-adapter protein IraP.